We begin with the raw amino-acid sequence, 127 residues long: Large ribosomal subunit protein bL17 (127 aa).

The protein belongs to the bacterial ribosomal protein bL17 family. Part of the 50S ribosomal subunit. Contacts protein L32.

The sequence is that of Large ribosomal subunit protein bL17 from Pediococcus pentosaceus (strain ATCC 25745 / CCUG 21536 / LMG 10740 / 183-1w).